A 95-amino-acid polypeptide reads, in one-letter code: RING finger protein Z (95 aa).

Residue Gly-2 is the site of N-myristoyl glycine; by host attachment. The RING-type; atypical zinc-finger motif lies at 38-74 (CKSCWFANKGLLKCSNHYLCLKCLTLMLRRSDYCGIC). Residues 88-91 (PSAP) carry the PTAP/PSAP motif motif.

The protein belongs to the arenaviridae Z protein family. Interacts with protein NP; this interaction probably directs the encapsidated genome to budding sites. Interacts (via RING domain) with polymerase L; this interaction inhibits viral transcription and replication, Z partially blocks the product exit tunnel for the releasing nascent RNA product. Interacts with the glycoprotein complex; this interaction plays a role in virion budding. Interacts with host eIF4E; this interaction results in eIF4E reduced affinity for its substrate, the 5'-m7 G cap structure. Interacts (via late-budding domain) with host TSG101; this interaction is essential for budding and release of viral particles. Interacts with host RPLP0; this interaction may serve to load ribosome-like particles inside the virion. Interacts with host PML; this interaction induces PML bodies redistribution in the cytoplasm upon viral infection. Myristoylation is required for the role of RING finger protein Z in assembly and budding.

The protein resides in the virion. Its subcellular location is the host cytoplasm. It is found in the host perinuclear region. The protein localises to the host cell membrane. Functionally, plays a crucial role in virion assembly and budding. Expressed late in the virus life cycle, it acts as an inhibitor of viral transcription and RNA synthesis by interacting with the viral polymerase L. Presumably recruits the NP encapsidated genome to cellular membranes at budding sites via direct interaction with NP. Plays critical roles in the final steps of viral release by interacting with host TSG101, a member of the vacuolar protein-sorting pathway and using other cellular host proteins involved in vesicle formation pathway. The budding of the virus progeny occurs after association of protein Z with the viral glycoprotein complex SSP-GP1-GP2 at the cell periphery, step that requires myristoylation of protein Z. Also selectively represses protein production by associating with host eIF4E. In cell-based minigenome assay, has an inhibitory effect on the ribonucleoprotein machinery (vRNP), which is responsible for the replication and transcription of the viral genome. The polypeptide is RING finger protein Z (Neotoma (wood rats)).